The sequence spans 36 residues: ADCLNEGDWCADWSGPSCCGEMWCSCPGFGKCRCKK.

Disulfide bonds link Cys-3–Cys-19, Cys-10–Cys-24, Cys-18–Cys-34, and Cys-26–Cys-32.

Expressed by the venom gland.

It localises to the secreted. Its function is as follows. Binds at site 4 of sodium channels (Nav) and inhibits the fast inactivation of cockroach channels. This toxin is active only on insects. Has a potent activity against S.litura larvae. The polypeptide is Delta-amaurobitoxin-Pl1c (Pireneitega luctuosa (Tangled nest spider)).